The sequence spans 274 residues: MAD2L1-binding protein (274 aa).

The interval 45-78 (ASEAFCPRDCMVPVVFPGPVSQEGCCQFTCELLK) is interaction with MAD2L1. At S102 the chain carries Phosphoserine.

The protein belongs to the MAD2L1BP family. In terms of assembly, interacts with MAD2L1.

The protein resides in the nucleus. It localises to the cytoplasm. The protein localises to the cytoskeleton. Its subcellular location is the spindle. In terms of biological role, may function to silence the spindle checkpoint and allow mitosis to proceed through anaphase by binding MAD2L1 after it has become dissociated from the MAD2L1-CDC20 complex. The chain is MAD2L1-binding protein (MAD2L1BP) from Homo sapiens (Human).